The sequence spans 635 residues: Threonine--tRNA ligase (635 aa).

The TGS domain occupies 1-61 (MTVVRLPDGT…EIDSDLVLIT (61 aa)). The segment at 242-533 (DHRKLGKQLD…LIEHHAGALP (292 aa)) is catalytic. Residues Cys333, His384, and His510 each coordinate Zn(2+).

It belongs to the class-II aminoacyl-tRNA synthetase family. Homodimer. Requires Zn(2+) as cofactor.

It localises to the cytoplasm. It carries out the reaction tRNA(Thr) + L-threonine + ATP = L-threonyl-tRNA(Thr) + AMP + diphosphate + H(+). Functionally, catalyzes the attachment of threonine to tRNA(Thr) in a two-step reaction: L-threonine is first activated by ATP to form Thr-AMP and then transferred to the acceptor end of tRNA(Thr). Also edits incorrectly charged L-seryl-tRNA(Thr). This is Threonine--tRNA ligase from Nitrosomonas eutropha (strain DSM 101675 / C91 / Nm57).